The chain runs to 435 residues: Citrate synthase (435 aa).

Residues His311 and Asp370 contribute to the active site.

This sequence belongs to the citrate synthase family.

The enzyme catalyses oxaloacetate + acetyl-CoA + H2O = citrate + CoA + H(+). Its pathway is carbohydrate metabolism; tricarboxylic acid cycle; isocitrate from oxaloacetate: step 1/2. The polypeptide is Citrate synthase (gltA) (Rickettsia slovaca (strain 13-B)).